The sequence spans 382 residues: Nonsense-mediated mRNA decay factor SMG9 (382 aa).

A disordered region spans residues 1–66 (MKKVEILKTP…PDSSVSKSSG (66 aa)).

This sequence belongs to the SMG9 family.

In terms of biological role, involved in nonsense-mediated decay (NMD) of mRNAs containing premature stop codons. Probable component of kinase complex containing smg-1 and recruited to stalled ribosomes. In Caenorhabditis briggsae, this protein is Nonsense-mediated mRNA decay factor SMG9 (smg-9).